Consider the following 384-residue polypeptide: Na(+)/H(+) antiporter NhaA (384 aa).

Transmembrane regions (helical) follow at residues 17–37, 53–73, 89–109, 118–138, 147–167, 171–191, 198–218, 251–271, 283–303, 321–341, and 354–374; these read SGLFLISCTLFSLVIANSAIA, LEYWINDGLMTIFFLLIGLEL, MLPIFGAIGGMIVPAGLFLVM, GAGIPMATDIAFALAILSLLG, IFLTALAVIDDLGAILIIAVF, TLLWTNLCIALGIFGFLLILN, LIPYLIGGVFMWYFMLHSGVH, PVAFFILPLFALANTAIVLSS, IGIALGLIIGKPLGIFLLSML, ILAVGFLGGIGFTMSIFITLL, and FVILISSLIAGIIGYFSLKYV.

Belongs to the NhaA Na(+)/H(+) (TC 2.A.33) antiporter family.

The protein localises to the cell inner membrane. It carries out the reaction Na(+)(in) + 2 H(+)(out) = Na(+)(out) + 2 H(+)(in). Its function is as follows. Na(+)/H(+) antiporter that extrudes sodium in exchange for external protons. This Flavobacterium psychrophilum (strain ATCC 49511 / DSM 21280 / CIP 103535 / JIP02/86) protein is Na(+)/H(+) antiporter NhaA.